The following is a 479-amino-acid chain: UDP-N-acetylmuramate--L-alanine ligase (479 aa).

Gly114–Thr120 contacts ATP.

This sequence belongs to the MurCDEF family.

Its subcellular location is the cytoplasm. It carries out the reaction UDP-N-acetyl-alpha-D-muramate + L-alanine + ATP = UDP-N-acetyl-alpha-D-muramoyl-L-alanine + ADP + phosphate + H(+). It functions in the pathway cell wall biogenesis; peptidoglycan biosynthesis. Functionally, cell wall formation. This chain is UDP-N-acetylmuramate--L-alanine ligase, found in Pelodictyon phaeoclathratiforme (strain DSM 5477 / BU-1).